Reading from the N-terminus, the 159-residue chain is Phosphopantetheine adenylyltransferase (159 aa).

Residue S9 coordinates substrate. ATP is bound by residues 9–10 and H17; that span reads SF. Residues K41, I75, and K89 each coordinate substrate. ATP-binding positions include 90–92, E100, and 124–130; these read GLR and LEHISSS.

This sequence belongs to the bacterial CoaD family. Homohexamer. Requires Mg(2+) as cofactor.

It is found in the cytoplasm. It catalyses the reaction (R)-4'-phosphopantetheine + ATP + H(+) = 3'-dephospho-CoA + diphosphate. It functions in the pathway cofactor biosynthesis; coenzyme A biosynthesis; CoA from (R)-pantothenate: step 4/5. Functionally, reversibly transfers an adenylyl group from ATP to 4'-phosphopantetheine, yielding dephospho-CoA (dPCoA) and pyrophosphate. The polypeptide is Phosphopantetheine adenylyltransferase (Bifidobacterium animalis subsp. lactis (strain AD011)).